Here is a 93-residue protein sequence, read N- to C-terminus: Defensin-like protein 210 (93 aa).

The first 19 residues, 1–19, serve as a signal peptide directing secretion; it reads MKTIILFLTLLVISSSCTS. Cystine bridges form between Cys-63–Cys-80, Cys-66–Cys-85, and Cys-70–Cys-87.

The protein belongs to the DEFL family.

It is found in the secreted. In Arabidopsis thaliana (Mouse-ear cress), this protein is Defensin-like protein 210.